Here is a 387-residue protein sequence, read N- to C-terminus: Mannitol-1-phosphate 5-dehydrogenase (387 aa).

Residue 3 to 14 (ALHFGAGNIGRG) participates in NAD(+) binding.

The protein belongs to the mannitol dehydrogenase family.

It catalyses the reaction D-mannitol 1-phosphate + NAD(+) = beta-D-fructose 6-phosphate + NADH + H(+). In Yersinia pseudotuberculosis serotype O:3 (strain YPIII), this protein is Mannitol-1-phosphate 5-dehydrogenase.